The primary structure comprises 46 residues: Defensin Tk-AMP-D5 (46 aa).

Cystine bridges form between cysteine 3/cysteine 46, cysteine 14/cysteine 34, cysteine 20/cysteine 40, and cysteine 24/cysteine 42.

In terms of biological role, plant defense peptide. This is Defensin Tk-AMP-D5 from Triticum kiharae (Wheat).